Reading from the N-terminus, the 301-residue chain is Bifunctional protein FolD (301 aa).

NADP(+) contacts are provided by residues 166–168 (GKS), S191, and I232.

It belongs to the tetrahydrofolate dehydrogenase/cyclohydrolase family. As to quaternary structure, homodimer.

It catalyses the reaction (6R)-5,10-methylene-5,6,7,8-tetrahydrofolate + NADP(+) = (6R)-5,10-methenyltetrahydrofolate + NADPH. It carries out the reaction (6R)-5,10-methenyltetrahydrofolate + H2O = (6R)-10-formyltetrahydrofolate + H(+). It functions in the pathway one-carbon metabolism; tetrahydrofolate interconversion. Functionally, catalyzes the oxidation of 5,10-methylenetetrahydrofolate to 5,10-methenyltetrahydrofolate and then the hydrolysis of 5,10-methenyltetrahydrofolate to 10-formyltetrahydrofolate. The chain is Bifunctional protein FolD from Orientia tsutsugamushi (strain Ikeda) (Rickettsia tsutsugamushi).